The sequence spans 210 residues: Methylthioribulose-1-phosphate dehydratase (210 aa).

Histidine 97 and histidine 99 together coordinate Zn(2+).

This sequence belongs to the aldolase class II family. MtnB subfamily. Homotetramer. The cofactor is Zn(2+).

The enzyme catalyses 5-(methylsulfanyl)-D-ribulose 1-phosphate = 5-methylsulfanyl-2,3-dioxopentyl phosphate + H2O. It participates in amino-acid biosynthesis; L-methionine biosynthesis via salvage pathway; L-methionine from S-methyl-5-thio-alpha-D-ribose 1-phosphate: step 2/6. In terms of biological role, catalyzes the dehydration of methylthioribulose-1-phosphate (MTRu-1-P) into 2,3-diketo-5-methylthiopentyl-1-phosphate (DK-MTP-1-P). The protein is Methylthioribulose-1-phosphate dehydratase of Geobacillus kaustophilus (strain HTA426).